Reading from the N-terminus, the 263-residue chain is Leucyl/phenylalanyl-tRNA--protein transferase (263 aa).

This sequence belongs to the L/F-transferase family.

It is found in the cytoplasm. It carries out the reaction N-terminal L-lysyl-[protein] + L-leucyl-tRNA(Leu) = N-terminal L-leucyl-L-lysyl-[protein] + tRNA(Leu) + H(+). The catalysed reaction is N-terminal L-arginyl-[protein] + L-leucyl-tRNA(Leu) = N-terminal L-leucyl-L-arginyl-[protein] + tRNA(Leu) + H(+). It catalyses the reaction L-phenylalanyl-tRNA(Phe) + an N-terminal L-alpha-aminoacyl-[protein] = an N-terminal L-phenylalanyl-L-alpha-aminoacyl-[protein] + tRNA(Phe). In terms of biological role, functions in the N-end rule pathway of protein degradation where it conjugates Leu, Phe and, less efficiently, Met from aminoacyl-tRNAs to the N-termini of proteins containing an N-terminal arginine or lysine. The chain is Leucyl/phenylalanyl-tRNA--protein transferase from Novosphingobium aromaticivorans (strain ATCC 700278 / DSM 12444 / CCUG 56034 / CIP 105152 / NBRC 16084 / F199).